A 212-amino-acid polypeptide reads, in one-letter code: MKLPMPIAIQNTQPDVSFQSHSVPRSELAASTHPTRLAARLDPELSAATVVQLQKCARLQPRLAELLLGNDMDWNRIGWGPDLLRGHDPRRAALLAGSIWHARSLLKVVSQRDLARLVERIGADAHAFGIRHLAHAIADKLISDPEKLALQIEHDGHACLGAWLNIRPALERNRVLLRLPLGTAAENPAPEHDGASSGLFSLVIAHFEMESP.

Functionally, regulates cultivar-specific nodulation of soybean. This is Nodulation protein NolU (nolU) from Rhizobium fredii (Sinorhizobium fredii).